A 357-amino-acid chain; its full sequence is Chaperone protein DnaJ (357 aa).

In terms of domain architecture, J spans 4–69 (DYYAILGVDR…QKRKQYDETG (66 aa)). The segment at 132–213 (GASKNVKYRR…CHGTGTVSKN (82 aa)) adopts a CR-type zinc-finger fold. 8 residues coordinate Zn(2+): cysteine 145, cysteine 148, cysteine 161, cysteine 164, cysteine 187, cysteine 190, cysteine 201, and cysteine 204. CXXCXGXG motif repeat units lie at residues 145-152 (CEHCSGTG), 161-168 (CPTCHGSG), 187-194 (CRTCHGRG), and 201-208 (CTVCHGTG).

It belongs to the DnaJ family. As to quaternary structure, homodimer. Zn(2+) serves as cofactor.

Its subcellular location is the cytoplasm. Functionally, participates actively in the response to hyperosmotic and heat shock by preventing the aggregation of stress-denatured proteins and by disaggregating proteins, also in an autonomous, DnaK-independent fashion. Unfolded proteins bind initially to DnaJ; upon interaction with the DnaJ-bound protein, DnaK hydrolyzes its bound ATP, resulting in the formation of a stable complex. GrpE releases ADP from DnaK; ATP binding to DnaK triggers the release of the substrate protein, thus completing the reaction cycle. Several rounds of ATP-dependent interactions between DnaJ, DnaK and GrpE are required for fully efficient folding. Also involved, together with DnaK and GrpE, in the DNA replication of plasmids through activation of initiation proteins. This chain is Chaperone protein DnaJ, found in Picrophilus torridus (strain ATCC 700027 / DSM 9790 / JCM 10055 / NBRC 100828 / KAW 2/3).